Consider the following 320-residue polypeptide: Ferrochelatase (320 aa).

Fe cation contacts are provided by His194 and Glu275.

It belongs to the ferrochelatase family. Monomer.

It is found in the cytoplasm. The enzyme catalyses heme b + 2 H(+) = protoporphyrin IX + Fe(2+). It participates in porphyrin-containing compound metabolism; protoheme biosynthesis; protoheme from protoporphyrin-IX: step 1/1. Catalyzes the ferrous insertion into protoporphyrin IX. The polypeptide is Ferrochelatase (Shigella boydii serotype 18 (strain CDC 3083-94 / BS512)).